The following is a 338-amino-acid chain: GTPase Obg (338 aa).

An Obg domain is found at 1 to 159; sequence MKFLDKAIIH…RILRLELILI (159 aa). Residues 160–333 form the OBG-type G domain; the sequence is AHVGTLGLPN…IVKKIYDFLK (174 aa). Residues 166 to 173, 191 to 195, 213 to 216, 283 to 286, and 314 to 316 each bind GTP; these read GLPNSGKS, FTTLK, DIPG, NKID, and SAI. Residues Ser-173 and Thr-193 each contribute to the Mg(2+) site.

Belongs to the TRAFAC class OBG-HflX-like GTPase superfamily. OBG GTPase family. Monomer. The cofactor is Mg(2+).

It is found in the cytoplasm. Its function is as follows. An essential GTPase which binds GTP, GDP and possibly (p)ppGpp with moderate affinity, with high nucleotide exchange rates and a fairly low GTP hydrolysis rate. Plays a role in control of the cell cycle, stress response, ribosome biogenesis and in those bacteria that undergo differentiation, in morphogenesis control. The protein is GTPase Obg of Buchnera aphidicola subsp. Baizongia pistaciae (strain Bp).